Consider the following 403-residue polypeptide: Anti-sigma-I factor RsgI8 (403 aa).

Over methionine 1–arginine 59 the chain is Cytoplasmic. In terms of domain architecture, RsgI N-terminal anti-sigma spans glutamine 4–lysine 51. The helical transmembrane segment at isoleucine 60–asparagine 80 threads the bilayer. The Extracellular portion of the chain corresponds to asparagine 81–proline 403. Basic and acidic residues-rich tracts occupy residues valine 254–lysine 314, leucine 324–threonine 335, and valine 349–proline 403. A disordered region spans residues valine 254–proline 403.

As to quaternary structure, interacts (via RsgI N-terminal anti-sigma domain) with SigI8.

The protein localises to the cell membrane. Anti-sigma factor for SigI8. Negatively regulates SigI8 activity through direct interaction. The chain is Anti-sigma-I factor RsgI8 from Acetivibrio thermocellus (strain ATCC 27405 / DSM 1237 / JCM 9322 / NBRC 103400 / NCIMB 10682 / NRRL B-4536 / VPI 7372) (Clostridium thermocellum).